The primary structure comprises 358 residues: Type II restriction enzyme SacI (358 aa).

The catalysed reaction is Endonucleolytic cleavage of DNA to give specific double-stranded fragments with terminal 5'-phosphates.. Functionally, a subtype P restriction enzyme that recognizes the double-stranded sequence 5'-GAGCTC-3' and cleaves after T-5. This Streptomyces achromogenes protein is Type II restriction enzyme SacI.